A 2224-amino-acid polypeptide reads, in one-letter code: Coagulation factor V (2224 aa).

A signal peptide spans 1-28 (MFPGCPRLWVLVVLGTSWVGWGSQGTEA). 4 Plastocyanin-like domains span residues 30–193 (QLRQ…LLIC), 203–329 (TQKT…IKNC), 348–526 (KRWE…LLIC), and 536–684 (IQRA…DVKC). F5/8 type A domains lie at 30 to 329 (QLRQ…IKNC) and 348 to 684 (KRWE…DVKC). 2 N-linked (GlcNAc...) asparagine glycosylation sites follow: Asn51 and Asn55. 2 residues coordinate Ca(2+): Asp139 and Asp140. A disulfide bond links Cys167 and Cys193. N-linked (GlcNAc...) asparagine glycans are attached at residues Asn239, Asn297, Asn382, Asn460, and Asn468. An intrachain disulfide couples Cys248 to Cys329. Cys500 and Cys526 are disulfide-bonded. N-linked (GlcNAc...) asparagine glycosylation is present at Asn554. Cys603 and Cys684 are joined by a disulfide. Thr640 bears the Phosphothreonine mark. The segment at 692–1573 (SYEIFEPPES…PDNIAAWYLR (882 aa)) is b. Sulfotyrosine occurs at positions 693, 724, and 726. A propeptide spans 738–1573 (SFRNSSLNQE…PDNIAAWYLR (836 aa)) (activation peptide (connecting region)). Asn741, Asn752, Asn760, Asn776, and Asn782 each carry an N-linked (GlcNAc...) asparagine glycan. O-linked (GalNAc...) threonine glycosylation occurs at Thr805. The N-linked (GlcNAc...) asparagine glycan is linked to Asn821. Residues 822 to 831 (SSTAEHSSPY) show a composition bias toward polar residues. The segment at 822 to 842 (SSTAEHSSPYSEDPIEDPLQP) is disordered. Ser859 carries the post-translational modification Phosphoserine; by FAM20C. The segment at 894-927 (LSQDTGSPSGMRPWEDLPSQDTGSPSRMRPWKDP) is disordered. Tandem repeats lie at residues 895 to 911 (SQDT…EDLP) and 912 to 928 (SQDT…KDPP). The segment at 895–928 (SQDTGSPSGMRPWEDLPSQDTGSPSRMRPWKDPP) is 2 X 17 AA tandem repeats. 2 N-linked (GlcNAc...) asparagine glycosylation sites follow: Asn938 and Asn977. Disordered regions lie at residues 982-1001 (WGES…HPKF) and 1029-1048 (TRKK…PRTF). The segment covering 1029–1040 (TRKKKKEKHTHH) has biased composition (basic residues). N-linked (GlcNAc...) asparagine glycosylation is found at Asn1074, Asn1083, Asn1103, and Asn1106. Residues 1097–1157 (LPDHNQNSSN…SSSPELSEML (61 aa)) are disordered. Over residues 1099–1111 (DHNQNSSNDTGQA) the composition is skewed to polar residues. A compositionally biased stretch (low complexity) spans 1139 to 1154 (HSTSDPSHRSSSPELS). Repeat copies occupy residues 1185–1193 (VISPDLSQV), 1194–1202 (TLSPELSQT), 1203–1211 (NLSPDLSHT), 1212–1220 (TLSPELIQR), 1221–1229 (NLSPALGQM), 1230–1238 (PISPDLSHT), 1239–1247 (TLSPDLSHT), 1248–1256 (TLSLDLSQT), 1257–1265 (NLSPELSQT), 1266–1274 (NLSPALGQM), 1275–1283 (PLSPDLSHT), 1284–1292 (TLSLDFSQT), 1293–1301 (NLSPELSHM), 1302–1310 (TLSPELSQT), 1311–1319 (NLSPALGQM), 1320–1328 (PISPDLSHT), 1329–1337 (TLSLDFSQT), 1338–1346 (NLSPELSQT), 1347–1355 (NLSPALGQM), 1356–1364 (PLSPDPSHT), 1365–1373 (TLSLDLSQT), 1374–1382 (NLSPELSQT), 1383–1391 (NLSPDLSEM), 1392–1400 (PLFADLSQI), 1401–1409 (PLTPDLDQM), 1410–1418 (TLSPDLGET), 1419–1427 (DLSPNFGQM), 1428–1436 (SLSPDLSQV), 1437–1445 (TLSPDISDT), 1446–1454 (TLLPDLSQI), 1455–1463 (SPPPDLDQI), 1464–1472 (FYPSESSQS), 1473–1481 (LLLQEFNES), 1482–1490 (FPYPDLGQM), and 1493–1501 (PSSPTLNDT). Residues 1185 to 1501 (VISPDLSQVT…SPSSPTLNDT (317 aa)) form a 35 X 9 AA approximate tandem repeats of [TNP]-L-S-P-D-L-S-Q-T region. The interval 1341 to 1367 (PELSQTNLSPALGQMPLSPDPSHTTLS) is disordered. Asn1479 is a glycosylation site (N-linked (GlcNAc...) asparagine). N-linked (GlcNAc...) asparagine glycosylation occurs at Asn1499. 3 positions are modified to sulfotyrosine: Tyr1522, Tyr1538, and Tyr1543. A glycan (N-linked (GlcNAc...) asparagine) is linked at Asn1559. 2 consecutive Plastocyanin-like domains span residues 1578–1751 (NRRN…LLIC) and 1761–1907 (NMPM…DRDC). The 330-residue stretch at 1578–1907 (NRRNYYIAAE…TPFLIMDRDC (330 aa)) folds into the F5/8 type A 3 domain. The residue at position 1593 (Tyr1593) is a Sulfotyrosine. Asn1703 carries N-linked (GlcNAc...) asparagine glycosylation. Cys1725 and Cys1751 are oxidised to a cystine. Residues His1843 and His1845 each coordinate Cu cation. Cystine bridges form between Cys1907–Cys2061 and Cys2066–Cys2221. F5/8 type C domains are found at residues 1907-2061 (CRMP…LQGC) and 2066-2221 (CSTP…LFGC). N-linked (GlcNAc...) asparagine glycosylation is found at Asn2010 and Asn2209.

This sequence belongs to the multicopper oxidase family. In terms of assembly, factor Va, the activated form of factor V, is composed of a heavy chain and a light chain, non-covalently bound. The interaction between the two chains is calcium-dependent. Forms heterodimer with SERPINA5. Post-translationally, thrombin activates factor V proteolytically to the active cofactor, factor Va (formation of a heavy chain at the N-terminus and a light chain at the C-terminus). In terms of processing, sulfation is required for efficient thrombin cleavage and activation and for full procoagulant activity. Activated protein C inactivates factor V and factor Va by proteolytic degradation. Post-translationally, phosphorylated by FAM20C in the extracellular medium. In terms of tissue distribution, plasma.

It localises to the secreted. Inhibited by SERPINA5. In terms of biological role, central regulator of hemostasis. It serves as a critical cofactor for the prothrombinase activity of factor Xa that results in the activation of prothrombin to thrombin. The polypeptide is Coagulation factor V (F5) (Homo sapiens (Human)).